We begin with the raw amino-acid sequence, 783 residues long: Protein transport protein SEC23 B (783 aa).

Residues Cys59, Cys62, Cys81, and Cys84 each contribute to the Zn(2+) site. The tract at residues 59-84 is zinc finger-like; it reads CRICTAALNPFARVDFLAKIWICPIC.

This sequence belongs to the SEC23/SEC24 family. SEC23 subfamily. As to quaternary structure, component of the coat protein complex II (COPII), composed of at least five proteins: the Sec23/24 complex, the Sec13/31 complex and Sar1. Interacts with SEC24A.

Its subcellular location is the cytoplasmic vesicle. The protein localises to the COPII-coated vesicle membrane. The protein resides in the endoplasmic reticulum membrane. It is found in the membrane. Functionally, component of the coat protein complex II (COPII) which promotes the formation of transport vesicles from the endoplasmic reticulum (ER). The coat has two main functions, the physical deformation of the endoplasmic reticulum membrane into vesicles and the selection of cargo molecules. The polypeptide is Protein transport protein SEC23 B (Arabidopsis thaliana (Mouse-ear cress)).